The primary structure comprises 454 residues: Asparagine--tRNA ligase (454 aa).

The protein belongs to the class-II aminoacyl-tRNA synthetase family. In terms of assembly, homodimer.

The protein resides in the cytoplasm. It carries out the reaction tRNA(Asn) + L-asparagine + ATP = L-asparaginyl-tRNA(Asn) + AMP + diphosphate + H(+). This is Asparagine--tRNA ligase from Mycoplasma capricolum subsp. capricolum (strain California kid / ATCC 27343 / NCTC 10154).